Reading from the N-terminus, the 250-residue chain is AA9 family lytic polysaccharide monooxygenase F (250 aa).

The signal sequence occupies residues 1–21; the sequence is MAMSKIATLAGLLASAGLVAG. A Cu(2+)-binding site is contributed by histidine 22. O2 is bound at residue aspartate 51. Disulfide bonds link cysteine 77-cysteine 200 and cysteine 121-cysteine 125. Cu(2+) is bound at residue histidine 107. O2 is bound by residues histidine 186 and glutamine 195. Tyrosine 197 is a Cu(2+) binding site.

The protein belongs to the glycosyl hydrolase 61 family. The cofactor is Cu(2+).

The protein resides in the secreted. The enzyme catalyses Endohydrolysis of (1-&gt;4)-beta-D-glucosidic linkages in cellulose, lichenin and cereal beta-D-glucans.. In terms of biological role, lytic polysaccharide monooxygenase (LMPO) that depolymerizes crystalline and amorphous polysaccharides via the oxidation of scissile alpha- or beta-(1-4)-glycosidic bonds, yielding C1 or C4 oxidation products. Catalysis by LPMOs requires the reduction of the active-site copper from Cu(II) to Cu(I) by a reducing agent and H(2)O(2) or O(2) as a cosubstrate. Major secreted component of the extracellular cellulolytic system. In Emericella nidulans (strain FGSC A4 / ATCC 38163 / CBS 112.46 / NRRL 194 / M139) (Aspergillus nidulans), this protein is AA9 family lytic polysaccharide monooxygenase F.